We begin with the raw amino-acid sequence, 194 residues long: Imidazoleglycerol-phosphate dehydratase (194 aa).

It belongs to the imidazoleglycerol-phosphate dehydratase family.

Its subcellular location is the cytoplasm. The enzyme catalyses D-erythro-1-(imidazol-4-yl)glycerol 3-phosphate = 3-(imidazol-4-yl)-2-oxopropyl phosphate + H2O. It participates in amino-acid biosynthesis; L-histidine biosynthesis; L-histidine from 5-phospho-alpha-D-ribose 1-diphosphate: step 6/9. The protein is Imidazoleglycerol-phosphate dehydratase of Streptococcus sanguinis (strain SK36).